The following is a 417-amino-acid chain: Imidazolonepropionase (417 aa).

Residues His77 and His79 each coordinate Fe(3+). Residues His77 and His79 each contribute to the Zn(2+) site. 3 residues coordinate 4-imidazolone-5-propanoate: Arg86, Tyr149, and His182. Tyr149 contacts N-formimidoyl-L-glutamate. His247 serves as a coordination point for Fe(3+). His247 is a binding site for Zn(2+). Gln250 contacts 4-imidazolone-5-propanoate. Asp322 is a binding site for Fe(3+). Asp322 is a binding site for Zn(2+). N-formimidoyl-L-glutamate is bound by residues Asn324 and Gly326. Thr327 is a 4-imidazolone-5-propanoate binding site.

It belongs to the metallo-dependent hydrolases superfamily. HutI family. The cofactor is Zn(2+). Fe(3+) serves as cofactor.

The protein localises to the cytoplasm. The catalysed reaction is 4-imidazolone-5-propanoate + H2O = N-formimidoyl-L-glutamate. The protein operates within amino-acid degradation; L-histidine degradation into L-glutamate; N-formimidoyl-L-glutamate from L-histidine: step 3/3. In terms of biological role, catalyzes the hydrolytic cleavage of the carbon-nitrogen bond in imidazolone-5-propanoate to yield N-formimidoyl-L-glutamate. It is the third step in the universal histidine degradation pathway. This Cupriavidus necator (strain ATCC 17699 / DSM 428 / KCTC 22496 / NCIMB 10442 / H16 / Stanier 337) (Ralstonia eutropha) protein is Imidazolonepropionase.